The chain runs to 149 residues: MSIELILWLFSFASIMVLIGLTAYQLICLSDLEFDYINPYDSSSRINSVVLIEYALQGALCASFLLTLHWFPFLVMAPVAYYHGKLYMDRKHLVDVTEIFRQLNWEKKYRMIKLAFYFSLFIITIYRLVMTAVTLFIDEDANLVDTRTI.

3 helical membrane passes run 3 to 23 (IELI…GLTA), 59 to 79 (ALCA…MAPV), and 117 to 137 (YFSL…TLFI).

Belongs to the cornichon family.

It is found in the endoplasmic reticulum membrane. It localises to the golgi apparatus membrane. Acts as a cargo receptor necessary for the transportation of secretory proteins from the endoplasmic reticulum (ER) in COPII-coated vesicles targeted to the Golgi apparatus. The polypeptide is Protein cornichon homolog 2 (Oryza sativa subsp. japonica (Rice)).